The following is a 514-amino-acid chain: Peptide chain release factor 3 (514 aa).

Residues 8–268 (KKRRTFAIIS…TFLEFAPEPH (261 aa)) enclose the tr-type G domain. GTP is bound by residues 17–24 (SHPDAGKT), 85–89 (DTPGH), and 139–142 (NKLD).

It belongs to the TRAFAC class translation factor GTPase superfamily. Classic translation factor GTPase family. PrfC subfamily.

It is found in the cytoplasm. Functionally, increases the formation of ribosomal termination complexes and stimulates activities of RF-1 and RF-2. It binds guanine nucleotides and has strong preference for UGA stop codons. It may interact directly with the ribosome. The stimulation of RF-1 and RF-2 is significantly reduced by GTP and GDP, but not by GMP. The protein is Peptide chain release factor 3 of Streptococcus pyogenes serotype M2 (strain MGAS10270).